Here is a 214-residue protein sequence, read N- to C-terminus: Orotate phosphoribosyltransferase (214 aa).

K26 lines the 5-phospho-alpha-D-ribose 1-diphosphate pocket. Residue 34–35 coordinates orotate; the sequence is FF. 5-phospho-alpha-D-ribose 1-diphosphate contacts are provided by residues 72–73, R98, K99, K102, H104, and 123–131; these read YK and DDVISAGTS. Residues S127 and R155 each contribute to the orotate site.

This sequence belongs to the purine/pyrimidine phosphoribosyltransferase family. PyrE subfamily. Homodimer. It depends on Mg(2+) as a cofactor.

It carries out the reaction orotidine 5'-phosphate + diphosphate = orotate + 5-phospho-alpha-D-ribose 1-diphosphate. Its pathway is pyrimidine metabolism; UMP biosynthesis via de novo pathway; UMP from orotate: step 1/2. Its function is as follows. Catalyzes the transfer of a ribosyl phosphate group from 5-phosphoribose 1-diphosphate to orotate, leading to the formation of orotidine monophosphate (OMP). The protein is Orotate phosphoribosyltransferase of Chromobacterium violaceum (strain ATCC 12472 / DSM 30191 / JCM 1249 / CCUG 213 / NBRC 12614 / NCIMB 9131 / NCTC 9757 / MK).